A 173-amino-acid chain; its full sequence is T-cell surface glycoprotein CD3 gamma chain (173 aa).

The first 22 residues, 1–22 (MEQGKHLAGLILAVFLLQGTMA), serve as a signal peptide directing secretion. Over 23-111 (HVKEVKVDDN…NCIELNPSTV (89 aa)) the chain is Extracellular. The region spanning 24–94 (VKEVKVDDNR…GSNNQSKSLQ (71 aa)) is the Ig-like domain. Cys42 and Cys83 are joined by a disulfide. N-linked (GlcNAc...) asparagine glycans are attached at residues Asn45 and Asn88. Residues 112–132 (AGFIFTEIVSIFLLAVGVYFI) form a helical membrane-spanning segment. Topologically, residues 133–173 (AGQEGVRQSRASDKQTLLNNDQLYQPLKEREDDQYSHLRKN) are cytoplasmic. Position 141 is a phosphoserine (Ser141). Position 144 is a phosphoserine; by PKC (Ser144). Positions 145 to 173 (DKQTLLNNDQLYQPLKEREDDQYSHLRKN) constitute an ITAM domain. Positions 149 to 150 (LL) match the Di-leucine motif motif.

In terms of assembly, the TCR-CD3 complex is composed of a CD3D/CD3E and a CD3G/CD3E heterodimers that preferentially associate with TCRalpha and TCRbeta, respectively, to form TCRalpha/CD3E/CD3G and TCRbeta/CD3G/CD3E trimers. In turn, the hexamer interacts with CD3Z homodimer to form the TCR-CD3 complex. Alternatively, TCRalpha and TCRbeta can be replaced by TCRgamma and TCRdelta. Phosphorylated on Tyr residues after T-cell receptor triggering by LCK in association with CD4/CD8. Phosphorylated also by PKC; leading to the TCR complex down-regulation. In terms of processing, phosphorylated on Tyr residues after T-cell receptor triggering by LCK in association with CD4/CD8.

The protein localises to the cell membrane. Part of the TCR-CD3 complex present on T-lymphocyte cell surface that plays an essential role in adaptive immune response. When antigen presenting cells (APCs) activate T-cell receptor (TCR), TCR-mediated signals are transmitted across the cell membrane by the CD3 chains CD3D, CD3E, CD3G and CD3Z. All CD3 chains contain immunoreceptor tyrosine-based activation motifs (ITAMs) in their cytoplasmic domain. Upon TCR engagement, these motifs become phosphorylated by Src family protein tyrosine kinases LCK and FYN, resulting in the activation of downstream signaling pathways. In addition to this role of signal transduction in T-cell activation, CD3G plays an essential role in the dynamic regulation of TCR expression at the cell surface. Indeed, constitutive TCR cycling is dependent on the di-leucine-based (diL) receptor-sorting motif present in CD3G. This is T-cell surface glycoprotein CD3 gamma chain (CD3G) from Bos taurus (Bovine).